We begin with the raw amino-acid sequence, 123 residues long: Periplasmic [Fe] hydrogenase small subunit (123 aa).

The tat-type signal signal peptide spans 1–34; sequence MQIASITRRGFLKVACVTTGAALIGIRMTGKAVA. Positions 103-123 are disordered; the sequence is TTAGKLPNPRASEFEGPYPYE.

As to quaternary structure, heterodimer of a large and a small subunit. Predicted to be exported by the Tat system. The position of the signal peptide cleavage has been experimentally proven.

It localises to the periplasm. It carries out the reaction H2 + 2 oxidized [2Fe-2S]-[ferredoxin] = 2 reduced [2Fe-2S]-[ferredoxin] + 2 H(+). May be involved in hydrogen uptake for the reduction of sulfate to hydrogen sulfide in an electron transport chain. Cytochrome c3 is likely to be the physiological electron carrier for the enzyme. This is Periplasmic [Fe] hydrogenase small subunit (hydB) from Nitratidesulfovibrio vulgaris (strain ATCC 29579 / DSM 644 / CCUG 34227 / NCIMB 8303 / VKM B-1760 / Hildenborough) (Desulfovibrio vulgaris).